A 143-amino-acid chain; its full sequence is MKTFSAKPHEVKREWFVIDAQDKVLGRVATEVASRLRGKHKPEYTPHVDTGDYIIVINADKLRVTGAKFEDKKYFRHSGFPGGIYERTFREMQDQFPGRALEQAVKGMLPKGPLGYAMIKKLKVYAGAEHAHAAQQPKVLELK.

It belongs to the universal ribosomal protein uL13 family. In terms of assembly, part of the 50S ribosomal subunit.

Its function is as follows. This protein is one of the early assembly proteins of the 50S ribosomal subunit, although it is not seen to bind rRNA by itself. It is important during the early stages of 50S assembly. The chain is Large ribosomal subunit protein uL13 from Neisseria gonorrhoeae (strain ATCC 700825 / FA 1090).